The primary structure comprises 182 residues: Ribosome-recycling factor (182 aa).

The protein belongs to the RRF family.

The protein localises to the cytoplasm. Its function is as follows. Responsible for the release of ribosomes from messenger RNA at the termination of protein biosynthesis. May increase the efficiency of translation by recycling ribosomes from one round of translation to another. The polypeptide is Ribosome-recycling factor (Mycoplasma capricolum subsp. capricolum (strain California kid / ATCC 27343 / NCTC 10154)).